Here is a 166-residue protein sequence, read N- to C-terminus: UPF0304 protein VFMJ11_1926 (166 aa).

This sequence belongs to the UPF0304 family.

The sequence is that of UPF0304 protein VFMJ11_1926 from Aliivibrio fischeri (strain MJ11) (Vibrio fischeri).